A 103-amino-acid polypeptide reads, in one-letter code: Cell division suppressor protein YneA (103 aa).

Positions 36-87 (VKIKVQDGDTLWSLADHVAEKKHINKEDFIEWVTENNHLQTADIKPGDELIL) constitute a LysM domain.

The protein belongs to the YneA family.

It localises to the cytoplasm. In terms of biological role, inhibits cell division during the SOS response. Affects a later stage of the cell division protein assembly, after the assembly of the Z ring, by probably suppressing recruitment of FtsL and/or DivIC to the division machinery. In Bacillus velezensis (strain DSM 23117 / BGSC 10A6 / LMG 26770 / FZB42) (Bacillus amyloliquefaciens subsp. plantarum), this protein is Cell division suppressor protein YneA.